The following is a 143-amino-acid chain: NADH-quinone oxidoreductase subunit A (143 aa).

Transmembrane regions (helical) follow at residues 8–28 (FGNV…GYLT), 63–83 (FYVV…LFPW), and 93–113 (FALV…VYAW).

This sequence belongs to the complex I subunit 3 family. NDH-1 is composed of 14 different subunits. Subunits NuoA, H, J, K, L, M, N constitute the membrane sector of the complex.

The protein localises to the cell inner membrane. It carries out the reaction a quinone + NADH + 5 H(+)(in) = a quinol + NAD(+) + 4 H(+)(out). Its function is as follows. NDH-1 shuttles electrons from NADH, via FMN and iron-sulfur (Fe-S) centers, to quinones in the respiratory chain. The immediate electron acceptor for the enzyme in this species is believed to be a menaquinone. Couples the redox reaction to proton translocation (for every two electrons transferred, four hydrogen ions are translocated across the cytoplasmic membrane), and thus conserves the redox energy in a proton gradient. This chain is NADH-quinone oxidoreductase subunit A, found in Chlorobium phaeovibrioides (strain DSM 265 / 1930) (Prosthecochloris vibrioformis (strain DSM 265)).